The sequence spans 305 residues: Uridylate-specific endoribonuclease D (305 aa).

An N-terminal signal peptide occupies residues 1-17 (MKVYFVFLCLLPSLISG). In terms of domain architecture, EndoU spans 33–305 (SNAEIQSLAE…RYVASSYPNI (273 aa)). Residues His182, His197, and Lys240 contribute to the active site. Asn288 carries an N-linked (GlcNAc...) asparagine glycan.

It belongs to the ENDOU family. Monomer. Mn(2+) serves as cofactor.

The protein localises to the secreted. It carries out the reaction ribonucleotidyl-uridine-RNA = a 5'-end dephospho-uridine-RNA + a 3'-end 2',3'-cyclophospho-ribonucleotide-RNA. Endoribonuclease that cleaves single-stranded RNAs at 5' of uridylates and releases a product with a 2',3'-cyclic phosphate at the 3'-end. The sequence is that of Uridylate-specific endoribonuclease D (endou-d) from Xenopus laevis (African clawed frog).